The sequence spans 235 residues: Peptidyl-tRNA hydrolase (235 aa).

Tyr-14 is a tRNA binding site. Residue His-19 is the Proton acceptor of the active site. The tRNA site is built by Phe-64, Asn-66, and Asn-112. The segment at 188 to 235 (APARNSGTRPDNPGKGSPEKPAAKPANDPIAEPPSLSDRLRALTERFR) is disordered. The segment covering 225–235 (DRLRALTERFR) has biased composition (basic and acidic residues).

Belongs to the PTH family. As to quaternary structure, monomer.

It is found in the cytoplasm. The catalysed reaction is an N-acyl-L-alpha-aminoacyl-tRNA + H2O = an N-acyl-L-amino acid + a tRNA + H(+). In terms of biological role, hydrolyzes ribosome-free peptidyl-tRNAs (with 1 or more amino acids incorporated), which drop off the ribosome during protein synthesis, or as a result of ribosome stalling. Its function is as follows. Catalyzes the release of premature peptidyl moieties from peptidyl-tRNA molecules trapped in stalled 50S ribosomal subunits, and thus maintains levels of free tRNAs and 50S ribosomes. This Paracoccus denitrificans (strain Pd 1222) protein is Peptidyl-tRNA hydrolase.